The sequence spans 469 residues: Chromosomal replication initiator protein DnaA (469 aa).

The interval 1 to 71 is domain I, interacts with DnaA modulators; it reads MKEFWQTCVS…EALAAEWYQR (71 aa). Residues 71 to 131 form a domain II region; the sequence is RPVQVTFELP…DAANIVYERS (61 aa). A domain III, AAA+ region region spans residues 132-348; sequence RLNTDLTFEN…GALRKVLAYA (217 aa). The ATP site is built by glycine 176, glycine 178, lysine 179, and threonine 180. The tract at residues 349-469 is domain IV, binds dsDNA; the sequence is RFHGRDVLTV…LHVLEQTLKG (121 aa).

This sequence belongs to the DnaA family. In terms of assembly, oligomerizes as a right-handed, spiral filament on DNA at oriC.

The protein resides in the cytoplasm. Plays an essential role in the initiation and regulation of chromosomal replication. ATP-DnaA binds to the origin of replication (oriC) to initiate formation of the DNA replication initiation complex once per cell cycle. Binds the DnaA box (a 9 base pair repeat at the origin) and separates the double-stranded (ds)DNA. Forms a right-handed helical filament on oriC DNA; dsDNA binds to the exterior of the filament while single-stranded (ss)DNA is stabiized in the filament's interior. The ATP-DnaA-oriC complex binds and stabilizes one strand of the AT-rich DNA unwinding element (DUE), permitting loading of DNA polymerase. After initiation quickly degrades to an ADP-DnaA complex that is not apt for DNA replication. Binds acidic phospholipids. The polypeptide is Chromosomal replication initiator protein DnaA (Bordetella parapertussis (strain 12822 / ATCC BAA-587 / NCTC 13253)).